The following is a 208-amino-acid chain: Small ribosomal subunit protein uS4 (208 aa).

Residues 99 to 165 (RRLDNVVFQL…PRLKEILSSL (67 aa)) enclose the S4 RNA-binding domain.

This sequence belongs to the universal ribosomal protein uS4 family. Part of the 30S ribosomal subunit. Contacts protein S5. The interaction surface between S4 and S5 is involved in control of translational fidelity.

One of the primary rRNA binding proteins, it binds directly to 16S rRNA where it nucleates assembly of the body of the 30S subunit. Its function is as follows. With S5 and S12 plays an important role in translational accuracy. The protein is Small ribosomal subunit protein uS4 of Desulfitobacterium hafniense (strain DSM 10664 / DCB-2).